Reading from the N-terminus, the 397-residue chain is 3-ketoacyl-CoA thiolase, mitochondrial (397 aa).

The transit peptide at 1-16 (MALLRGVFIVAAKRTP) directs the protein to the mitochondrion; not cleaved. An N6-acetyllysine; alternate modification is found at Lys-25. N6-succinyllysine; alternate is present on Lys-25. Cys-92 functions as the Acyl-thioester intermediate in the catalytic mechanism. The residue at position 119 (Thr-119) is a Phosphothreonine. Ser-121 bears the Phosphoserine mark. A Phosphotyrosine modification is found at Tyr-127. Phosphothreonine is present on Thr-136. Residue Lys-137 is modified to N6-acetyllysine; alternate. At Lys-137 the chain carries N6-succinyllysine; alternate. Ser-140 is subject to Phosphoserine. N6-acetyllysine; alternate is present on residues Lys-143, Lys-171, Lys-191, and Lys-209. An N6-succinyllysine; alternate mark is found at Lys-143, Lys-171, Lys-191, and Lys-209. N6-succinyllysine occurs at positions 212 and 214. Residues Arg-224 and Thr-227 each coordinate CoA. Residue Lys-234 is modified to N6-acetyllysine; alternate. Position 234 is an N6-succinyllysine; alternate (Lys-234). At Lys-240 the chain carries N6-succinyllysine. An N6-acetyllysine modification is found at Lys-241. A CoA-binding site is contributed by Ser-251. N6-acetyllysine is present on residues Lys-269 and Lys-270. Position 305 is an N6-acetyllysine; alternate (Lys-305). Lys-305 is subject to N6-succinyllysine; alternate. Phosphoserine is present on Ser-310. Position 312 is an N6-acetyllysine; alternate (Lys-312). Lys-312 is subject to N6-succinyllysine; alternate. Ser-333 is modified (phosphoserine). Residues Lys-340 and Lys-375 each carry the N6-acetyllysine modification. Catalysis depends on Cys-382, which acts as the Proton donor/acceptor.

It belongs to the thiolase-like superfamily. Thiolase family. In terms of assembly, homotetramer. Interacts with BNIP3.

It is found in the mitochondrion. It catalyses the reaction an acyl-CoA + acetyl-CoA = a 3-oxoacyl-CoA + CoA. It carries out the reaction 2 acetyl-CoA = acetoacetyl-CoA + CoA. The enzyme catalyses acetyl-CoA + H2O = acetate + CoA + H(+). The catalysed reaction is propanoyl-CoA + H2O = propanoate + CoA + H(+). It catalyses the reaction butanoyl-CoA + H2O = butanoate + CoA + H(+). It carries out the reaction hexanoyl-CoA + H2O = hexanoate + CoA + H(+). The enzyme catalyses octanoyl-CoA + H2O = octanoate + CoA + H(+). The catalysed reaction is decanoyl-CoA + H2O = decanoate + CoA + H(+). It catalyses the reaction dodecanoyl-CoA + H2O = dodecanoate + CoA + H(+). It carries out the reaction tetradecanoyl-CoA + H2O = tetradecanoate + CoA + H(+). The enzyme catalyses hexadecanoyl-CoA + H2O = hexadecanoate + CoA + H(+). It participates in lipid metabolism; fatty acid beta-oxidation. In the production of energy from fats, this is one of the enzymes that catalyzes the last step of the mitochondrial beta-oxidation pathway, an aerobic process breaking down fatty acids into acetyl-CoA. Using free coenzyme A/CoA, catalyzes the thiolytic cleavage of medium- to long-chain unbranched 3-oxoacyl-CoAs into acetyl-CoA and a fatty acyl-CoA shortened by two carbon atoms. Also catalyzes the condensation of two acetyl-CoA molecules into acetoacetyl-CoA and could be involved in the production of ketone bodies. Also displays hydrolase activity on various fatty acyl-CoAs. Thereby, could be responsible for the production of acetate in a side reaction to beta-oxidation. Abolishes BNIP3-mediated apoptosis and mitochondrial damage. The sequence is that of 3-ketoacyl-CoA thiolase, mitochondrial (ACAA2) from Bos taurus (Bovine).